The chain runs to 506 residues: H/ACA ribonucleoprotein complex subunit DKC1 (506 aa).

The interval 1–26 (MADTESKKEKKRKSKKISDEEVGDIQ) is disordered. Catalysis depends on Asp120, which acts as the Nucleophile. One can recognise a PUA domain in the interval 291–366 (HKRIVMKDSA…VVAKIKRVIM (76 aa)). Disordered regions lie at residues 391 to 410 (GLLD…WKEG) and 419 to 506 (VKKG…ADSD). Basic and acidic residues predominate over residues 421-434 (KGGEASAKRKRDES). A compositionally biased stretch (basic residues) spans 457-466 (EKKKKKKEKK).

It belongs to the pseudouridine synthase TruB family. As to quaternary structure, part of the H/ACA small nucleolar ribonucleoprotein (H/ACA snoRNP) complex. The complex binds a box H/ACA small nucleolar RNA (snoRNA), which may target the specific site of modification within the RNA substrate.

It is found in the nucleus. The protein resides in the nucleolus. It localises to the cajal body. The catalysed reaction is uridine in 5S rRNA = pseudouridine in 5S rRNA. Its function is as follows. Catalytic subunit of H/ACA small nucleolar ribonucleoprotein (H/ACA snoRNP) complex, which catalyzes pseudouridylation of rRNA. This involves the isomerization of uridine such that the ribose is subsequently attached to C5, instead of the normal N1. Pseudouridine ('psi') residues may serve to stabilize the conformation of rRNAs. Required for ribosome biogenesis and telomere maintenance. The protein is H/ACA ribonucleoprotein complex subunit DKC1 of Danio rerio (Zebrafish).